We begin with the raw amino-acid sequence, 132 residues long: U-scoloptoxin(05)-Er3a (132 aa).

Residues 1 to 19 form the signal peptide; that stretch reads MRSWFVFVALLAVVFLPSS.

It belongs to the scoloptoxin-05 family. In terms of processing, contains 5 disulfide bonds. In terms of tissue distribution, expressed by the venom gland.

The protein localises to the secreted. The protein is U-scoloptoxin(05)-Er3a of Ethmostigmus rubripes (Giant centipede).